A 326-amino-acid chain; its full sequence is Vestitone reductase (326 aa).

Residues 12–18 (GGTGFLG), arginine 37, and tyrosine 164 each bind NADP(+).

Belongs to the NAD(P)-dependent epimerase/dehydratase family. Dihydroflavonol-4-reductase subfamily. In terms of assembly, monomer. In terms of tissue distribution, detected in roots, and at lower levels in root nodules. Not detected in petioles, leaf and stem.

The enzyme catalyses a (3R,4R)-4,2'-dihydroxyisoflavan + NADP(+) = a (3R)-2'-hydroxyisoflavanone + NADPH + H(+). With respect to regulation, inhibited by vestitone concentrations above 50 uM. Stereospecific enzyme that catalyzes the NADPH-dependent reduction of (3R)-vestitone to (3R,4R)-4'-methoxyisoflavan-2',4,7-triol (DMI). Has no activity with (3S)-vestitone. Catalyzes the penultimate step in the biosynthesis of the phytoalexin medicarpin, and thereby contributes to plant defense reactions. This Medicago sativa (Alfalfa) protein is Vestitone reductase.